Here is a 224-residue protein sequence, read N- to C-terminus: Pyridoxine/pyridoxamine 5'-phosphate oxidase (224 aa).

Residues 19 to 22 (RGEY) and Lys81 each bind substrate. Residues 76-81 (RSVLCK), 91-92 (FT), Lys98, and Gln120 each bind FMN. Substrate contacts are provided by Tyr138 and Arg142. FMN is bound by residues 155–156 (QS) and Trp201. Substrate is bound at residue 207–209 (RMH). Arg211 contributes to the FMN binding site.

It belongs to the pyridoxamine 5'-phosphate oxidase family. Homodimer. The cofactor is FMN.

The enzyme catalyses pyridoxamine 5'-phosphate + O2 + H2O = pyridoxal 5'-phosphate + H2O2 + NH4(+). It catalyses the reaction pyridoxine 5'-phosphate + O2 = pyridoxal 5'-phosphate + H2O2. It functions in the pathway cofactor metabolism; pyridoxal 5'-phosphate salvage; pyridoxal 5'-phosphate from pyridoxamine 5'-phosphate: step 1/1. The protein operates within cofactor metabolism; pyridoxal 5'-phosphate salvage; pyridoxal 5'-phosphate from pyridoxine 5'-phosphate: step 1/1. Catalyzes the oxidation of either pyridoxine 5'-phosphate (PNP) or pyridoxamine 5'-phosphate (PMP) into pyridoxal 5'-phosphate (PLP). The sequence is that of Pyridoxine/pyridoxamine 5'-phosphate oxidase from Mycobacterium bovis (strain ATCC BAA-935 / AF2122/97).